The primary structure comprises 354 residues: Biotin synthase (354 aa).

One can recognise a Radical SAM core domain in the interval 41–268; sequence NEVQISRLLS…LSRVRLSAGR (228 aa). Positions 56, 60, and 63 each coordinate [4Fe-4S] cluster. Residues C100, C131, C191, and R263 each contribute to the [2Fe-2S] cluster site.

The protein belongs to the radical SAM superfamily. Biotin synthase family. Homodimer. The cofactor is [4Fe-4S] cluster. [2Fe-2S] cluster serves as cofactor.

The enzyme catalyses (4R,5S)-dethiobiotin + (sulfur carrier)-SH + 2 reduced [2Fe-2S]-[ferredoxin] + 2 S-adenosyl-L-methionine = (sulfur carrier)-H + biotin + 2 5'-deoxyadenosine + 2 L-methionine + 2 oxidized [2Fe-2S]-[ferredoxin]. It participates in cofactor biosynthesis; biotin biosynthesis; biotin from 7,8-diaminononanoate: step 2/2. Catalyzes the conversion of dethiobiotin (DTB) to biotin by the insertion of a sulfur atom into dethiobiotin via a radical-based mechanism. In Shewanella amazonensis (strain ATCC BAA-1098 / SB2B), this protein is Biotin synthase.